We begin with the raw amino-acid sequence, 542 residues long: Protein MGF 505-11L (542 aa).

Belongs to the asfivirus MGF 505 family.

Its function is as follows. Plays a role in virus cell tropism, and may be required for efficient virus replication in macrophages. The polypeptide is Protein MGF 505-11L (African swine fever virus (isolate Warthog/Namibia/Wart80/1980) (ASFV)).